The primary structure comprises 231 residues: Probable transglycosylase SceD (231 aa).

The signal sequence occupies residues 1–27; it reads MKKTLLASSLAVGLGIVAGNAGHEAHA. Polar residues predominate over residues 106–116; that stretch reads AVQANQVQSQE. The segment at 106-153 is disordered; it reads AVQANQVQSQEVEAPQNAQTQQPQASTSNNSQVTATPTESKSSEGSSV. Residues 119 to 137 show a composition bias toward low complexity; it reads APQNAQTQQPQASTSNNSQ. Over residues 138 to 153 the composition is skewed to polar residues; that stretch reads VTATPTESKSSEGSSV.

Belongs to the transglycosylase family. SceD subfamily.

The protein resides in the secreted. In terms of biological role, is able to cleave peptidoglycan and affects clumping and separation of bacterial cells. The chain is Probable transglycosylase SceD (sceD) from Staphylococcus aureus (strain USA300).